The following is a 110-amino-acid chain: PTS system oligo-beta-mannoside-specific EIIA component (110 aa).

Residues 9–107 (LTDEQISFQL…VKEMLDLFKT (99 aa)) enclose the PTS EIIA type-3 domain. The Tele-phosphohistidine intermediate role is filled by H83. H83 carries the phosphohistidine; by HPr modification.

The protein resides in the cytoplasm. Functionally, the phosphoenolpyruvate-dependent sugar phosphotransferase system (sugar PTS), a major carbohydrate active transport system, catalyzes the phosphorylation of incoming sugar substrates concomitantly with their translocation across the cell membrane. The enzyme II GmuABC PTS system is involved in the transport of oligo-glucomannans such as cellobiose or mannobiose. This chain is PTS system oligo-beta-mannoside-specific EIIA component, found in Bacillus subtilis (strain 168).